A 255-amino-acid polypeptide reads, in one-letter code: Indole-3-glycerol phosphate synthase (255 aa).

The protein belongs to the TrpC family.

The catalysed reaction is 1-(2-carboxyphenylamino)-1-deoxy-D-ribulose 5-phosphate + H(+) = (1S,2R)-1-C-(indol-3-yl)glycerol 3-phosphate + CO2 + H2O. It participates in amino-acid biosynthesis; L-tryptophan biosynthesis; L-tryptophan from chorismate: step 4/5. The chain is Indole-3-glycerol phosphate synthase from Streptococcus pneumoniae (strain 70585).